The primary structure comprises 146 residues: Catabolic 3-dehydroquinase (146 aa).

Y24 (proton acceptor) is an active-site residue. 3 residues coordinate substrate: N78, H84, and D91. H104 (proton donor) is an active-site residue. Substrate-binding positions include 105–106 (IT) and R115.

This sequence belongs to the type-II 3-dehydroquinase family. Homododecamer. Adopts a ring-like structure, composed of an arrangement of two hexameric rings stacked on top of one another.

It catalyses the reaction 3-dehydroquinate = 3-dehydroshikimate + H2O. It functions in the pathway aromatic compound metabolism; 3,4-dihydroxybenzoate biosynthesis; 3,4-dihydroxybenzoate from 3-dehydroquinate: step 1/2. Is involved in the catabolism of quinate. Allows the utilization of quinate as carbon source via the beta-ketoadipate pathway. The chain is Catabolic 3-dehydroquinase from Candida dubliniensis (strain CD36 / ATCC MYA-646 / CBS 7987 / NCPF 3949 / NRRL Y-17841) (Yeast).